An 811-amino-acid polypeptide reads, in one-letter code: Probable inorganic carbon transporter subunit DabA (811 aa).

The Zn(2+) site is built by cysteine 336, aspartate 338, histidine 498, and cysteine 513.

This sequence belongs to the inorganic carbon transporter (TC 9.A.2) DabA family. As to quaternary structure, forms a complex with DabB. It depends on Zn(2+) as a cofactor.

Its subcellular location is the cell inner membrane. Functionally, part of an energy-coupled inorganic carbon pump. In Azorhizobium caulinodans (strain ATCC 43989 / DSM 5975 / JCM 20966 / LMG 6465 / NBRC 14845 / NCIMB 13405 / ORS 571), this protein is Probable inorganic carbon transporter subunit DabA.